An 834-amino-acid polypeptide reads, in one-letter code: Periplasmic nitrate reductase (834 aa).

The segment at residues 1-31 (MSSELTRRNLLKAHAAGIAAATAGIALPAAA) is a signal peptide (tat-type signal). In terms of domain architecture, 4Fe-4S Mo/W bis-MGD-type spans 43–99 (IKWSKAPCRFCGTGCGVMVGVKEGKVVATHGDMQAEVNRGLNCIKGYFLSKIMYGKD). Positions 50, 53, 57, and 85 each coordinate [4Fe-4S] cluster. Mo-bis(molybdopterin guanine dinucleotide) contacts are provided by residues Lys87, Gln154, Asn179, Cys183, 216–223 (WGSNMAEM), 247–251 (STFTH), 266–268 (GTD), Met377, Gln381, Asn487, 513–514 (SD), Lys536, Asp563, and 723–732 (TGRVLEHWHS). Trp799 contributes to the substrate binding site. The Mo-bis(molybdopterin guanine dinucleotide) site is built by Asn807 and Lys824.

It belongs to the prokaryotic molybdopterin-containing oxidoreductase family. NasA/NapA/NarB subfamily. In terms of assembly, component of the periplasmic nitrate reductase NapAB complex composed of NapA and NapB. [4Fe-4S] cluster serves as cofactor. The cofactor is Mo-bis(molybdopterin guanine dinucleotide). Predicted to be exported by the Tat system. The position of the signal peptide cleavage has not been experimentally proven.

Its subcellular location is the periplasm. The enzyme catalyses 2 Fe(II)-[cytochrome] + nitrate + 2 H(+) = 2 Fe(III)-[cytochrome] + nitrite + H2O. Its function is as follows. Catalytic subunit of the periplasmic nitrate reductase complex NapAB. Receives electrons from NapB and catalyzes the reduction of nitrate to nitrite. This chain is Periplasmic nitrate reductase, found in Agrobacterium fabrum (strain C58 / ATCC 33970) (Agrobacterium tumefaciens (strain C58)).